We begin with the raw amino-acid sequence, 62 residues long: Teretoxin Tsu1.1 (62 aa).

An N-terminal signal peptide occupies residues Met1–Phe21. The propeptide occupies Pro22–Arg40.

It belongs to the teretoxin A (TA) superfamily. Post-translationally, contains 2 disulfide bonds. As to expression, expressed by the venom duct.

It localises to the secreted. The protein is Teretoxin Tsu1.1 of Terebra subulata (Chocolate spotted auger).